A 98-amino-acid polypeptide reads, in one-letter code: uncharacterized protein (98 aa).

The next 2 membrane-spanning stretches (helical) occupy residues 14-34 and 41-61; these read FLVI…PVTA and MTGA…ASII.

The protein resides in the cell membrane. This is an uncharacterized protein from Haemophilus influenzae (strain ATCC 51907 / DSM 11121 / KW20 / Rd).